The chain runs to 173 residues: Calcium-binding protein 5 (173 aa).

EF-hand domains follow at residues 28–63, 82–99, 105–140, and 142–173; these read DELDELREAFLEFDKDQDGFISYKDLGNLMRTMGYM, GRVDFEDFVELMTPKLLA, IGVQEMRDAFKEFDANGDGEITLAELQQAMQRLLGE, and LTPREIAEVVQEADINGDGTVDFEEFVKMMSR. Positions 41, 43, 45, and 52 each coordinate Ca(2+). Residues aspartate 118, asparagine 120, aspartate 122, glutamate 124, glutamate 129, aspartate 155, asparagine 157, aspartate 159, threonine 161, and glutamate 166 each contribute to the Ca(2+) site.

In terms of assembly, interacts with CACNA1C (via C-terminal CDB motif) in a calcium-dependent manner. Interacts with STXBP1. Interacts with MYO6. In terms of tissue distribution, expressed in inner and outer plexiform layers of the retina, and retinal bipolar cells (at protein level). Expressed in the inner hair cells (IHC) of the cochlea.

It localises to the cytoplasm. Its function is as follows. Inhibits calcium-dependent inactivation of L-type calcium channel and shifts voltage dependence of activation to more depolarized membrane potentials. Involved in the transmission of light signals. May positively regulate neurotransmitter vesicle endocytosis and exocytosis in a salt-dependent manner. May play a role in the extension and network organization of neurites. The sequence is that of Calcium-binding protein 5 (Cabp5) from Mus musculus (Mouse).